The following is a 473-amino-acid chain: Ribulose bisphosphate carboxylase large chain 1 (473 aa).

Substrate is bound by residues asparagine 116 and threonine 166. Residue lysine 168 is the Proton acceptor of the active site. Lysine 170 lines the substrate pocket. Residues lysine 194, aspartate 196, and glutamate 197 each contribute to the Mg(2+) site. Lysine 194 carries the N6-carboxylysine modification. The Proton acceptor role is filled by histidine 287. Substrate contacts are provided by arginine 288, histidine 320, and serine 372.

It belongs to the RuBisCO large chain family. Type I subfamily. As to quaternary structure, heterohexadecamer of 8 large chains and 8 small chains. Mg(2+) is required as a cofactor.

The enzyme catalyses 2 (2R)-3-phosphoglycerate + 2 H(+) = D-ribulose 1,5-bisphosphate + CO2 + H2O. It catalyses the reaction D-ribulose 1,5-bisphosphate + O2 = 2-phosphoglycolate + (2R)-3-phosphoglycerate + 2 H(+). RuBisCO catalyzes two reactions: the carboxylation of D-ribulose 1,5-bisphosphate, the primary event in carbon dioxide fixation, as well as the oxidative fragmentation of the pentose substrate. Both reactions occur simultaneously and in competition at the same active site. This Acidithiobacillus ferrooxidans (Thiobacillus ferrooxidans) protein is Ribulose bisphosphate carboxylase large chain 1.